The chain runs to 404 residues: MKLPIYLDYSATTPVDPRVAQKMCECLTMEGNFGNPASRSHVFGWKAEEAVENARRQVAELVNADPREIVWTSGATESDNLAIKGVAHFNASKGKHIITSKIEHKAVLDTTRQLEREGFEVTYLEPGEDGLITPAMVAAALREDTILVSVMHVNNEIGTVNDIAAIGELTRSRGVLYHVDAAQSTGKVAIDLERMKVDLMSFSAHKTYGPKGIGALYVRRKPRVRLEAQMHGGGHERGMRSGTLATHQIVGMGEAFRIAREEMAAESRRIAGLSHRFHEQVSTLEEVYLNGSATARVPHNLNLSFNYVEGESLIMSLRDLAVSSGSACTSASLEPSYVLRALGRNDELAHSSIRFTFGRFTTEEEVDYAARKVCEAVGKLRELSPLWDMYKDGVDLSKIEWQAH.

Pyridoxal 5'-phosphate is bound by residues 75-76, Asn155, Gln183, and 203-205; these read AT and SAH. An N6-(pyridoxal phosphate)lysine modification is found at Lys206. Thr243 provides a ligand contact to pyridoxal 5'-phosphate. The active-site Cysteine persulfide intermediate is the Cys328. Cys328 is a binding site for [2Fe-2S] cluster.

This sequence belongs to the class-V pyridoxal-phosphate-dependent aminotransferase family. NifS/IscS subfamily. Homodimer. Forms a heterotetramer with IscU, probably interacts with other sulfur acceptors. Pyridoxal 5'-phosphate is required as a cofactor.

The protein localises to the cytoplasm. The enzyme catalyses (sulfur carrier)-H + L-cysteine = (sulfur carrier)-SH + L-alanine. Its pathway is cofactor biosynthesis; iron-sulfur cluster biosynthesis. With respect to regulation, inhibited by equimolar N-iodoacetyl-N'-(5-sulfo-1-naphthyl)ethylenediamine. Its function is as follows. Master enzyme that delivers sulfur to a number of partners involved in Fe-S cluster assembly, tRNA modification or cofactor biosynthesis. Catalyzes the removal of elemental sulfur from cysteine to produce alanine via an enzyme-bound persulfide intermediate. Functions as a sulfur delivery protein for Fe-S cluster synthesis. Cluster assembly on IscU homodimers proceeds sequentially from 1 2Fe-2S per dimer, to 2 2Fe-2S per dimer and finally 1 4Fe-4S per dimer. This chain is Cysteine desulfurase IscS, found in Azotobacter vinelandii.